Reading from the N-terminus, the 264-residue chain is Phosphonoacetaldehyde hydrolase (264 aa).

Catalysis depends on aspartate 9, which acts as the Nucleophile. Aspartate 9 and alanine 11 together coordinate Mg(2+). The Schiff-base intermediate with substrate role is filled by lysine 50. Aspartate 183 is a Mg(2+) binding site.

It belongs to the HAD-like hydrolase superfamily. PhnX family. In terms of assembly, homodimer. Mg(2+) is required as a cofactor.

It carries out the reaction phosphonoacetaldehyde + H2O = acetaldehyde + phosphate + H(+). Its function is as follows. Involved in phosphonate degradation. The sequence is that of Phosphonoacetaldehyde hydrolase from Bacillus cereus (strain ATCC 10987 / NRS 248).